Here is a 159-residue protein sequence, read N- to C-terminus: Transcriptional repressor NrdR (159 aa).

Positions 1–11 are enriched in polar residues; the sequence is MQCPTCQNTDS. Residues 1–21 are disordered; sequence MQCPTCQNTDSRVLESRSADS. Residues 3–34 fold into a zinc finger; it reads CPTCQNTDSRVLESRSADSGKSVRRRRECLNC. In terms of domain architecture, ATP-cone spans 49–139; that stretch reads VSVMKKDGSR…VYRKFNGVKD (91 aa).

It belongs to the NrdR family. Requires Zn(2+) as cofactor.

Functionally, negatively regulates transcription of bacterial ribonucleotide reductase nrd genes and operons by binding to NrdR-boxes. The chain is Transcriptional repressor NrdR from Prochlorococcus marinus (strain MIT 9215).